The chain runs to 155 residues: Probable cyclic pyranopterin monophosphate synthase (155 aa).

Substrate is bound by residues 74–76 (MCH) and 110–111 (ME). Asp125 is an active-site residue.

The protein belongs to the MoaC family. As to quaternary structure, homohexamer; trimer of dimers.

The enzyme catalyses (8S)-3',8-cyclo-7,8-dihydroguanosine 5'-triphosphate = cyclic pyranopterin phosphate + diphosphate. It functions in the pathway cofactor biosynthesis; molybdopterin biosynthesis. Its function is as follows. Catalyzes the conversion of (8S)-3',8-cyclo-7,8-dihydroguanosine 5'-triphosphate to cyclic pyranopterin monophosphate (cPMP). The sequence is that of Probable cyclic pyranopterin monophosphate synthase from Methanoregula boonei (strain DSM 21154 / JCM 14090 / 6A8).